The primary structure comprises 253 residues: DNA repair protein RecO (253 aa).

This sequence belongs to the RecO family.

Its function is as follows. Involved in DNA repair and RecF pathway recombination. This Pediococcus pentosaceus (strain ATCC 25745 / CCUG 21536 / LMG 10740 / 183-1w) protein is DNA repair protein RecO.